The sequence spans 274 residues: Orotidine 5'-phosphate decarboxylase (274 aa).

Lys-96 acts as the Proton donor in catalysis.

Belongs to the OMP decarboxylase family. Type 2 subfamily.

It carries out the reaction orotidine 5'-phosphate + H(+) = UMP + CO2. It participates in pyrimidine metabolism; UMP biosynthesis via de novo pathway; UMP from orotate: step 2/2. This chain is Orotidine 5'-phosphate decarboxylase, found in Bacteroides fragilis (strain YCH46).